A 58-amino-acid chain; its full sequence is UPF0339 protein TDE_0826 (58 aa).

Belongs to the UPF0339 family.

This is UPF0339 protein TDE_0826 from Treponema denticola (strain ATCC 35405 / DSM 14222 / CIP 103919 / JCM 8153 / KCTC 15104).